The chain runs to 387 residues: Putative odorant receptor 19b (387 aa).

Residues M1–Y40 are Cytoplasmic-facing. Residues S41 to L61 form a helical membrane-spanning segment. The Extracellular segment spans residues Q62 to E71. A helical membrane pass occupies residues S72–M92. The Cytoplasmic segment spans residues R93–E127. The chain crosses the membrane as a helical span at residues F128–I148. The Extracellular portion of the chain corresponds to S149–S171. Residues A172 to L192 form a helical membrane-spanning segment. The Cytoplasmic portion of the chain corresponds to N193 to S254. Residues L255–Y275 form a helical membrane-spanning segment. At F276 to M285 the chain is on the extracellular side. The chain crosses the membrane as a helical span at residues R286–Y306. Residues T307–R336 lie on the Cytoplasmic side of the membrane. The helical transmembrane segment at L337–V357 threads the bilayer. At P358 to E387 the chain is on the extracellular side.

The protein belongs to the insect chemoreceptor superfamily. Heteromeric odorant receptor channel (TC 1.A.69) family. Or2a subfamily. In terms of assembly, interacts with Orco. Complexes exist early in the endomembrane system in olfactory sensory neurons (OSNs), coupling these complexes to the conserved ciliary trafficking pathway.

The protein resides in the cell membrane. Odorant receptor which mediates acceptance or avoidance behavior, depending on its substrates. The odorant receptor repertoire encodes a large collection of odor stimuli that vary widely in identity, intensity, and duration. May form a complex with Orco to form odorant-sensing units, providing sensitive and prolonged odorant signaling and calcium permeability. The polypeptide is Putative odorant receptor 19b (Drosophila melanogaster (Fruit fly)).